We begin with the raw amino-acid sequence, 263 residues long: Leukocyte-associated immunoglobulin-like receptor 1 (263 aa).

A signal peptide spans 1-21 (MPLHSVIVLVLVLCLGWKSNT). Positions 27–112 (SDFTICAEPG…VWSQRSNDLQ (86 aa)) constitute an Ig-like C2-type domain. C49 and C96 are joined by a disulfide. N87 is a glycosylation site (N-linked (GlcNAc...) asparagine). A helical transmembrane segment spans residues 144–164 (ILTVVSVIFLLCLSLFLFCFL). 2 consecutive short sequence motifs (ITIM motif) follow at residues 225–230 (VTYAQL) and 255–260 (STYAAI). 2 positions are modified to phosphotyrosine: Y227 and Y257.

As to quaternary structure, interacts with SH2 domains of tyrosine-protein phosphatases PTPN6 and PTPN11. The interaction with PTPN6 is constitutive. Interacts with the SH2 domain of CSK. Binds with high affinity to extracellular matrix collagens, the interaction is functionally important. In terms of processing, phosphorylation at Tyr-227 and Tyr-257 activates it. May be phosphorylated by LCK. N-glycosylated. As to expression, expressed in lymphoid and non-lymphoid organs.

The protein localises to the membrane. Functionally, functions as an inhibitory receptor that plays a constitutive negative regulatory role on cytolytic function of natural killer (NK) cells, B-cells and T-cells. Activation by Tyr phosphorylation results in recruitment and activation of the phosphatases PTPN6 and PTPN11. It also reduces the increase of intracellular calcium evoked by B-cell receptor ligation. May also play its inhibitory role independently of SH2-containing phosphatases. Modulates cytokine production in CD4+ T-cells, down-regulating IL2 and IFNG production while inducing secretion of transforming growth factor beta. Also down-regulates IgG and IgE production in B-cells as well as IL8, IL10 and TNF secretion. Inhibits proliferation and induces apoptosis in myeloid leukemia cell lines as well as prevents nuclear translocation of NF-kappa-B p65 subunit/RELA and phosphorylation of I-kappa-B alpha/CHUK in these cells. Inhibits the differentiation of peripheral blood precursors towards dendritic cells. The chain is Leukocyte-associated immunoglobulin-like receptor 1 (Lair1) from Rattus norvegicus (Rat).